The primary structure comprises 427 residues: Enolase (427 aa).

Position 163 (Q163) interacts with (2R)-2-phosphoglycerate. E205 acts as the Proton donor in catalysis. Mg(2+)-binding residues include D242, E285, and D312. Positions 337, 366, 367, and 388 each coordinate (2R)-2-phosphoglycerate. The active-site Proton acceptor is K337.

The protein belongs to the enolase family. Mg(2+) serves as cofactor.

Its subcellular location is the cytoplasm. The protein localises to the secreted. It is found in the cell surface. It carries out the reaction (2R)-2-phosphoglycerate = phosphoenolpyruvate + H2O. Its pathway is carbohydrate degradation; glycolysis; pyruvate from D-glyceraldehyde 3-phosphate: step 4/5. Its function is as follows. Catalyzes the reversible conversion of 2-phosphoglycerate (2-PG) into phosphoenolpyruvate (PEP). It is essential for the degradation of carbohydrates via glycolysis. The protein is Enolase of Bradyrhizobium sp. (strain ORS 278).